The sequence spans 621 residues: 2-hydroxyacyl-CoA lyase 2 (621 aa).

The helical transmembrane segment at 7–29 (LGCSLGAALGGVIFASYKLGLLY) threads the bilayer. Glu-87 provides a ligand contact to thiamine diphosphate. The segment at 459-539 (DFVGSAAYIM…VIALVGNDAC (81 aa)) is thiamine pyrophosphate binding. 2 residues coordinate Mg(2+): Asp-510 and Asn-536.

This sequence belongs to the TPP enzyme family. Mg(2+) is required as a cofactor. The cofactor is thiamine diphosphate.

It is found in the endoplasmic reticulum membrane. It catalyses the reaction 2-hydroxyoctadecanoyl-CoA = heptadecanal + formyl-CoA. The enzyme catalyses (2R)-hydroxyhexadecanoyl-CoA = pentadecanal + formyl-CoA. Endoplasmic reticulum 2-OH acyl-CoA lyase involved in the cleavage (C1 removal) reaction in the fatty acid alpha-oxydation in a thiamine pyrophosphate (TPP)-dependent manner. The protein is 2-hydroxyacyl-CoA lyase 2 (ilvbl) of Danio rerio (Zebrafish).